Reading from the N-terminus, the 124-residue chain is Large ribosomal subunit protein bL12 (124 aa).

The protein belongs to the bacterial ribosomal protein bL12 family. As to quaternary structure, homodimer. Part of the ribosomal stalk of the 50S ribosomal subunit. Forms a multimeric L10(L12)X complex, where L10 forms an elongated spine to which 2 to 4 L12 dimers bind in a sequential fashion. Binds GTP-bound translation factors.

Forms part of the ribosomal stalk which helps the ribosome interact with GTP-bound translation factors. Is thus essential for accurate translation. The polypeptide is Large ribosomal subunit protein bL12 (Burkholderia thailandensis (strain ATCC 700388 / DSM 13276 / CCUG 48851 / CIP 106301 / E264)).